The primary structure comprises 124 residues: Glycine cleavage system H protein (124 aa).

Positions 22 to 104 (VATVGITEFA…YGAGWLFRVE (83 aa)) constitute a Lipoyl-binding domain. N6-lipoyllysine is present on lysine 63.

The protein belongs to the GcvH family. The glycine cleavage system is composed of four proteins: P, T, L and H. It depends on (R)-lipoate as a cofactor.

In terms of biological role, the glycine cleavage system catalyzes the degradation of glycine. The H protein shuttles the methylamine group of glycine from the P protein to the T protein. The protein is Glycine cleavage system H protein of Beutenbergia cavernae (strain ATCC BAA-8 / DSM 12333 / CCUG 43141 / JCM 11478 / NBRC 16432 / NCIMB 13614 / HKI 0122).